Reading from the N-terminus, the 189-residue chain is dCTP deaminase (189 aa).

Residues 112-117 (KSTYAR), 136-138 (TLE), glutamine 157, tyrosine 171, and glutamine 181 each bind dCTP. Residue glutamate 138 is the Proton donor/acceptor of the active site.

The protein belongs to the dCTP deaminase family. In terms of assembly, homotrimer.

It carries out the reaction dCTP + H2O + H(+) = dUTP + NH4(+). It participates in pyrimidine metabolism; dUMP biosynthesis; dUMP from dCTP (dUTP route): step 1/2. Functionally, catalyzes the deamination of dCTP to dUTP. This is dCTP deaminase from Albidiferax ferrireducens (strain ATCC BAA-621 / DSM 15236 / T118) (Rhodoferax ferrireducens).